A 227-amino-acid chain; its full sequence is E3 ubiquitin-protein ligase ZNRF1 (227 aa).

The disordered stretch occupies residues 1-42 (MGGKQSTAARSRGPFPGVSTDDSAVPPPGGAPHFGHYRTGGG). A lipid anchor (N-myristoyl glycine) is attached at glycine 2. The segment at 2–10 (GGKQSTAAR) is required for endosomal and lysosomal localization and myristoylation. Residues serine 50, serine 52, and serine 53 each carry the phosphoserine modification. The interval 68–105 (PFGLYTPASRGTGDSERAPGGGGSASDSTYAHGNGYQE) is disordered. Tyrosine 103 carries the post-translational modification Phosphotyrosine; by SRC. At serine 123 the chain carries Phosphoserine. The RING-type; atypical zinc finger occupies 184 to 225 (CVICLEELLQGDTIARLPCLCIYHKSCIDSWFEVNRSCPEHP).

In terms of assembly, interacts with AKT1, GLUL and TUBB2A. Interacts with ZNRF2. Interacts (via its RING domain) with UBE2N. Interacts (when phosphorylated) with YWHAE. In terms of processing, N-myristoylation targets ZNRF1 to intracellular membranes. Phosphorylated by SRC at Tyr-103; leading to 'Lys-63'-linked ubiquitination of TLR3, lysosomal trafficking and degradation. As to expression, expressed primarily in the nervous system, with expression higher in developing brain relative to adult. Expressed at low levels in testis and thymus.

Its subcellular location is the endosome. The protein resides in the lysosome. The protein localises to the membrane. It localises to the cytoplasmic vesicle. It is found in the secretory vesicle. Its subcellular location is the synaptic vesicle membrane. It catalyses the reaction S-ubiquitinyl-[E2 ubiquitin-conjugating enzyme]-L-cysteine + [acceptor protein]-L-lysine = [E2 ubiquitin-conjugating enzyme]-L-cysteine + N(6)-ubiquitinyl-[acceptor protein]-L-lysine.. Its pathway is protein modification; protein ubiquitination. In terms of biological role, E3 ubiquitin-protein ligase that plays a role in different processes including cell differentiation, receptor recycling or regulation of inflammation. Mediates the ubiquitination of AKT1 and GLUL, thereby playing a role in neuron cells differentiation. Plays a role in the establishment and maintenance of neuronal transmission and plasticity. Regulates Schwann cells differentiation by mediating ubiquitination of GLUL. Promotes neurodegeneration by mediating 'Lys-48'-linked polyubiquitination and subsequent degradation of AKT1 in axons: degradation of AKT1 prevents AKT1-mediated phosphorylation of GSK3B, leading to GSK3B activation and phosphorylation of DPYSL2/CRMP2 followed by destabilization of microtubule assembly in axons. Ubiquitinates the Na(+)/K(+) ATPase alpha-1 subunit/ATP1A1 and thereby influences its endocytosis and/or degradation. Controls ligand-induced EGFR signaling via mediating receptor ubiquitination and recruitment of the ESCRT machinery. Acts as a negative feedback mechanism controlling TLR3 trafficking by mediating TLR3 'Lys-63'-linked polyubiquitination to reduce type I IFN production. Modulates inflammation by promoting caveolin-1/CAV1 ubiquitination and degradation to regulate TLR4-activated immune response. This Homo sapiens (Human) protein is E3 ubiquitin-protein ligase ZNRF1 (ZNRF1).